The primary structure comprises 201 residues: Large ribosomal subunit protein uL4 (201 aa).

The interval 44-68 (KAQKTRSEVAGTTKKSKKQKGGGAR) is disordered.

This sequence belongs to the universal ribosomal protein uL4 family. As to quaternary structure, part of the 50S ribosomal subunit.

Functionally, one of the primary rRNA binding proteins, this protein initially binds near the 5'-end of the 23S rRNA. It is important during the early stages of 50S assembly. It makes multiple contacts with different domains of the 23S rRNA in the assembled 50S subunit and ribosome. Forms part of the polypeptide exit tunnel. This Xanthomonas oryzae pv. oryzae (strain MAFF 311018) protein is Large ribosomal subunit protein uL4.